A 295-amino-acid polypeptide reads, in one-letter code: N-acetylmuramic acid 6-phosphate etherase (295 aa).

Residues 54 to 217 (VIAAFRRGGR…STASMVGIGK (164 aa)) enclose the SIS domain. The active-site Proton donor is Glu-82. The active site involves Glu-113.

It belongs to the GCKR-like family. MurNAc-6-P etherase subfamily. In terms of assembly, homodimer.

It carries out the reaction N-acetyl-D-muramate 6-phosphate + H2O = N-acetyl-D-glucosamine 6-phosphate + (R)-lactate. The protein operates within amino-sugar metabolism; N-acetylmuramate degradation. In terms of biological role, specifically catalyzes the cleavage of the D-lactyl ether substituent of MurNAc 6-phosphate, producing GlcNAc 6-phosphate and D-lactate. This is N-acetylmuramic acid 6-phosphate etherase from Geobacillus thermodenitrificans (strain NG80-2).